The chain runs to 350 residues: Transmembrane protein 185B (350 aa).

The next 7 helical transmembrane spans lie at 16 to 36 (LIYA…DGVI), 41 to 61 (WAVF…ASVG), 81 to 101 (FKAM…EVLV), 111 to 131 (FWLL…AACV), 168 to 188 (WLVV…VVLY), 211 to 231 (VTMA…EVLL), and 240 to 260 (MFSY…LMAT).

The protein belongs to the TMEM185 family.

The protein resides in the membrane. This is Transmembrane protein 185B (TMEM185B) from Bos taurus (Bovine).